The primary structure comprises 372 residues: MIFPWKCQSTQRDLWNIFKLWGWTMLCCDFLAHHGTDCWTYHYSEKPMNWQRARRFCRDNYTDLVAIQNKAEIEYLEKTLPFSRSYYWIGIRKIGGIWTWVGTNKSLTEEAENWGDGEPNNKKNKEDCVEIYIKRNKDAGKWNDDACHKLKAALCYTASCQPWSCSGHGECVEIINNYTCNCDVGYYGPQCQFVIQCEPLEAPELGTMDCTHPLGNFSFSSQCAFSCSEGTNLTGIEETTCGPFGNWSSPEPTCQVIQCEPLSAPDLGIMNCSHPLASFSFTSACTFICSEGTELIGKKKTICESSGIWSNPSPICQKLDKSFSMIKEGDYNPLFIPVAVMVTAFSGLAFIIWLARRLKKGKKSKRSMNDPY.

The first 28 residues, 1–28 (MIFPWKCQSTQRDLWNIFKLWGWTMLCC), serve as a signal peptide directing secretion. A propeptide spanning residues 29–38 (DFLAHHGTDC) is cleaved from the precursor. Residues 39–332 (WTYHYSEKPM…FSMIKEGDYN (294 aa)) are Extracellular-facing. The region spanning 55-155 (RFCRDNYTDL…ACHKLKAALC (101 aa)) is the C-type lectin domain. 9 disulfides stabilise this stretch: Cys-57/Cys-155, Cys-128/Cys-147, Cys-160/Cys-171, Cys-165/Cys-180, Cys-182/Cys-191, Cys-197/Cys-241, Cys-227/Cys-254, Cys-259/Cys-303, and Cys-289/Cys-316. Residues Asn-60 and Asn-104 are each glycosylated (N-linked (GlcNAc...) asparagine). Ca(2+) contacts are provided by Glu-118, Asn-120, Glu-126, Asn-143, and Asp-144. The region spanning 156 to 192 (YTASCQPWSCSGHGECVEIINNYTCNCDVGYYGPQCQ) is the EGF-like domain. A glycan (N-linked (GlcNAc...) asparagine) is linked at Asn-177. 2 consecutive Sushi domains span residues 195–256 (IQCE…TCQV) and 257–318 (IQCE…ICQK). N-linked (GlcNAc...) asparagine glycans are attached at residues Asn-232, Asn-246, and Asn-271. The chain crosses the membrane as a helical span at residues 333–355 (PLFIPVAVMVTAFSGLAFIIWLA). At 356–372 (RRLKKGKKSKRSMNDPY) the chain is on the cytoplasmic side.

It belongs to the selectin/LECAM family. Interaction with SELPLG/PSGL1 and PODXL2 is required for promoting recruitment and rolling of leukocytes. This interaction is dependent on the sialyl Lewis X glycan modification of SELPLG and PODXL2, and tyrosine sulfation modifications of SELPLG. Sulfation on 'Tyr-51' of SELPLG is important for L-selectin binding. Post-translationally, N-glycosylated. In terms of tissue distribution, expressed in B-cell lines and T-lymphocytes.

The protein resides in the cell membrane. In terms of biological role, calcium-dependent lectin that mediates cell adhesion by binding to glycoproteins on neighboring cells. Mediates the adherence of lymphocytes to endothelial cells of high endothelial venules in peripheral lymph nodes. Promotes initial tethering and rolling of leukocytes in endothelia. The chain is L-selectin (SELL) from Homo sapiens (Human).